Here is a 277-residue protein sequence, read N- to C-terminus: Protein CIMAP1D (277 aa).

3 STPGR repeats span residues P122–R148, P202–R227, and P238–R263. Residues P181–C277 are disordered.

The protein belongs to the CIMAP family.

This chain is Protein CIMAP1D (Cimap1d), found in Mus musculus (Mouse).